Reading from the N-terminus, the 213-residue chain is ATP phosphoribosyltransferase (213 aa).

Belongs to the ATP phosphoribosyltransferase family. Short subfamily. In terms of assembly, heteromultimer composed of HisG and HisZ subunits.

The protein localises to the cytoplasm. The catalysed reaction is 1-(5-phospho-beta-D-ribosyl)-ATP + diphosphate = 5-phospho-alpha-D-ribose 1-diphosphate + ATP. It functions in the pathway amino-acid biosynthesis; L-histidine biosynthesis; L-histidine from 5-phospho-alpha-D-ribose 1-diphosphate: step 1/9. In terms of biological role, catalyzes the condensation of ATP and 5-phosphoribose 1-diphosphate to form N'-(5'-phosphoribosyl)-ATP (PR-ATP). Has a crucial role in the pathway because the rate of histidine biosynthesis seems to be controlled primarily by regulation of HisG enzymatic activity. In Nitrosococcus oceani (strain ATCC 19707 / BCRC 17464 / JCM 30415 / NCIMB 11848 / C-107), this protein is ATP phosphoribosyltransferase.